A 403-amino-acid polypeptide reads, in one-letter code: Phosphoglycerate kinase (403 aa).

Residues 21 to 23, arginine 36, 59 to 62, arginine 119, and arginine 154 contribute to the substrate site; these read DFN and HLGR. ATP-binding positions include lysine 207, glycine 299, glutamate 330, and 357-360; that span reads GGDA.

This sequence belongs to the phosphoglycerate kinase family. Monomer.

The protein resides in the cytoplasm. The catalysed reaction is (2R)-3-phosphoglycerate + ATP = (2R)-3-phospho-glyceroyl phosphate + ADP. It functions in the pathway carbohydrate degradation; glycolysis; pyruvate from D-glyceraldehyde 3-phosphate: step 2/5. This chain is Phosphoglycerate kinase (pgk), found in Chlamydia muridarum (strain MoPn / Nigg).